The chain runs to 105 residues: Large ribosomal subunit protein bL21 (105 aa).

The protein belongs to the bacterial ribosomal protein bL21 family. Part of the 50S ribosomal subunit. Contacts protein L20.

This protein binds to 23S rRNA in the presence of protein L20. This is Large ribosomal subunit protein bL21 from Rickettsia prowazekii (strain Madrid E).